The chain runs to 307 residues: Acetaldehyde dehydrogenase 2 (307 aa).

Residue C131 is the Acyl-thioester intermediate of the active site. NAD(+) contacts are provided by residues 162–170 and N273; that span reads SVGPGTRKN.

This sequence belongs to the acetaldehyde dehydrogenase family.

It carries out the reaction acetaldehyde + NAD(+) + CoA = acetyl-CoA + NADH + H(+). The sequence is that of Acetaldehyde dehydrogenase 2 (aphF) from Comamonas testosteroni (Pseudomonas testosteroni).